Here is a 200-residue protein sequence, read N- to C-terminus: Late embryogenesis abundant protein 19 (200 aa).

Disordered stretches follow at residues 1-145 (MASH…KTGS) and 172-200 (TEDE…ARDH). Composition is skewed to basic and acidic residues over residues 13–23 (GETKAHTEEKA), 30–42 (SKDK…DRAS), 53–81 (QDTK…KDKT), 88–97 (ARDKAAESKD), and 105–114 (EKTEQAKQKA). The stretch at 52–81 (GQDTKEATKEKAQAAKERASETAQAAKDKT) forms a coiled coil. 2 stretches are compositionally biased toward low complexity: residues 115–130 (AETA…ETAQ) and 186–200 (TSAT…ARDH).

The protein belongs to the LEA type 4 family.

Involved in response to stress. This is Late embryogenesis abundant protein 19 from Oryza sativa subsp. japonica (Rice).